We begin with the raw amino-acid sequence, 384 residues long: N-acetyldiaminopimelate deacetylase (384 aa).

The active site involves Asp-74. Glu-133 serves as the catalytic Proton acceptor.

The protein belongs to the peptidase M20A family. N-acetyldiaminopimelate deacetylase subfamily.

It catalyses the reaction N-acetyl-(2S,6S)-2,6-diaminopimelate + H2O = (2S,6S)-2,6-diaminopimelate + acetate. Its pathway is amino-acid biosynthesis; L-lysine biosynthesis via DAP pathway; LL-2,6-diaminopimelate from (S)-tetrahydrodipicolinate (acetylase route): step 3/3. Functionally, catalyzes the conversion of N-acetyl-diaminopimelate to diaminopimelate and acetate. This is N-acetyldiaminopimelate deacetylase from Leuconostoc mesenteroides subsp. mesenteroides (strain ATCC 8293 / DSM 20343 / BCRC 11652 / CCM 1803 / JCM 6124 / NCDO 523 / NBRC 100496 / NCIMB 8023 / NCTC 12954 / NRRL B-1118 / 37Y).